Reading from the N-terminus, the 1050-residue chain is DNA polymerase I A, chloroplastic/mitochondrial (1050 aa).

The N-terminal 91 residues, methionine 1–arginine 91, are a transit peptide targeting the chloroplast and mitochondrion. The tract at residues proline 202–threonine 240 is disordered. Polar residues predominate over residues aspartate 228–threonine 240. In terms of domain architecture, 3'-5' exonuclease spans glutamate 312–glutamine 490. A disordered region spans residues valine 673–aspartate 694. The polymerase stretch occupies residues alanine 717–alanine 1048.

It belongs to the DNA polymerase type-A family. In terms of tissue distribution, expressed in shoot apical meristem.

The protein localises to the plastid. Its subcellular location is the chloroplast. It is found in the mitochondrion. The catalysed reaction is DNA(n) + a 2'-deoxyribonucleoside 5'-triphosphate = DNA(n+1) + diphosphate. Its activity is regulated as follows. Not inhibited by aphidicolin. In terms of biological role, in addition to polymerase activity, this DNA polymerase exhibits 5'-3' exonuclease activity. Required for DNA replication and accumulation in plastids and mitochondria. May be required for DNA repair in both organelles. In Arabidopsis thaliana (Mouse-ear cress), this protein is DNA polymerase I A, chloroplastic/mitochondrial (POLIA).